The chain runs to 204 residues: SOSS complex subunit B homolog (204 aa).

A DNA-binding region (OB) is located at residues 24–94 (IVLEVGVATV…TLYSGKNGEV (71 aa)). A disordered region spans residues 115–204 (RAEQQAVANP…GRGGLKGERR (90 aa)). Composition is skewed to low complexity over residues 122-131 (ANPAATPAGL) and 139-183 (GLPA…QTTT). Positions 187–198 (TRGGRGGGGRGG) are enriched in gly residues.

It belongs to the SOSS-B family.

This is SOSS complex subunit B homolog from Drosophila melanogaster (Fruit fly).